The chain runs to 505 residues: Aspartyl/glutamyl-tRNA(Asn/Gln) amidotransferase subunit B (505 aa).

This sequence belongs to the GatB/GatE family. GatB subfamily. As to quaternary structure, heterotrimer of A, B and C subunits.

It catalyses the reaction L-glutamyl-tRNA(Gln) + L-glutamine + ATP + H2O = L-glutaminyl-tRNA(Gln) + L-glutamate + ADP + phosphate + H(+). The enzyme catalyses L-aspartyl-tRNA(Asn) + L-glutamine + ATP + H2O = L-asparaginyl-tRNA(Asn) + L-glutamate + ADP + phosphate + 2 H(+). In terms of biological role, allows the formation of correctly charged Asn-tRNA(Asn) or Gln-tRNA(Gln) through the transamidation of misacylated Asp-tRNA(Asn) or Glu-tRNA(Gln) in organisms which lack either or both of asparaginyl-tRNA or glutaminyl-tRNA synthetases. The reaction takes place in the presence of glutamine and ATP through an activated phospho-Asp-tRNA(Asn) or phospho-Glu-tRNA(Gln). The protein is Aspartyl/glutamyl-tRNA(Asn/Gln) amidotransferase subunit B of Streptomyces avermitilis (strain ATCC 31267 / DSM 46492 / JCM 5070 / NBRC 14893 / NCIMB 12804 / NRRL 8165 / MA-4680).